The chain runs to 229 residues: Rab-like protein 2A (229 aa).

GTP-binding positions include 28–35 (GDSAVGKS), 76–80 (DTAGQ), and 133–136 (NKID). The tract at residues 200–229 (NLEQEEEDVPDQEQSGSIETPSEEVASPHS) is disordered.

This sequence belongs to the small GTPase superfamily. Rab family. Interacts with IFT27, IFT81, IFT172, ATP6V1E1, HK1, LDHC, MAPRE1 and HSPA2.

Functionally, plays an essential role in male fertility, sperm intra-flagellar transport, and tail assembly. Binds, in a GTP-regulated manner, to a specific set of effector proteins including key proteins involved in cilia development and function and delivers them into the growing sperm tail. The sequence is that of Rab-like protein 2A (RABL2A) from Pongo abelii (Sumatran orangutan).